Consider the following 146-residue polypeptide: MAGNSILLAALSVLSACQQSYFAMQVGKARSKYKVTPPSVSGSPDFERIFRAQQNCVEFYPIFIITLWMAGWYFNQVFATCLGLVYIYSRHQYFWGYAEAAKKRVTGFRLSLGVLALLTVLGAVGILNSFLDEYLDIDIAKKLRHF.

3 helical membrane-spanning segments follow: residues 6–26 (ILLA…AMQV), 59–79 (FYPI…QVFA), and 111–131 (SLGV…NSFL).

The protein belongs to the MAPEG family. In terms of assembly, homotrimer.

It localises to the endoplasmic reticulum membrane. It is found in the microsome membrane. The catalysed reaction is RX + glutathione = an S-substituted glutathione + a halide anion + H(+). It carries out the reaction 1-chloro-2,4-dinitrobenzene + glutathione = 2,4-dinitrophenyl-S-glutathione + chloride + H(+). It catalyses the reaction leukotriene C4 = leukotriene A4 + glutathione. The enzyme catalyses (5S)-hydroperoxy-(6E,8Z,11Z,14Z)-eicosatetraenoate + 2 glutathione = (5S)-hydroxy-(6E,8Z,11Z,14Z)-eicosatetraenoate + glutathione disulfide + H2O. With respect to regulation, each monomer binds on GSH molecule but only one subunit is catalytically active. Its function is as follows. Catalyzes several different glutathione-dependent reactions. Catalyzes the glutathione-dependent reduction of lipid hydroperoxides, such as 5-HPETE. Has glutathione transferase activity, toward xenobiotic electrophiles, such as 1-chloro-2, 4-dinitrobenzene (CDNB). Also catalyzes the conjugation of leukotriene A4 with reduced glutathione to form leukotriene C4 (LTC4). Involved in oxidative DNA damage induced by ER stress and anticancer agents by activating LTC4 biosynthetic machinery in nonimmune cells. This Bos taurus (Bovine) protein is Microsomal glutathione S-transferase 2 (MGST2).